The following is a 358-amino-acid chain: UDP-N-acetylglucosamine--N-acetylmuramyl-(pentapeptide) pyrophosphoryl-undecaprenol N-acetylglucosamine transferase (358 aa).

Residues 12–14, Asn124, Arg162, Ser185, Ile242, 261–266, and Gln287 contribute to the UDP-N-acetyl-alpha-D-glucosamine site; these read TGG and ALTVSE.

Belongs to the glycosyltransferase 28 family. MurG subfamily.

Its subcellular location is the cell inner membrane. It carries out the reaction di-trans,octa-cis-undecaprenyl diphospho-N-acetyl-alpha-D-muramoyl-L-alanyl-D-glutamyl-meso-2,6-diaminopimeloyl-D-alanyl-D-alanine + UDP-N-acetyl-alpha-D-glucosamine = di-trans,octa-cis-undecaprenyl diphospho-[N-acetyl-alpha-D-glucosaminyl-(1-&gt;4)]-N-acetyl-alpha-D-muramoyl-L-alanyl-D-glutamyl-meso-2,6-diaminopimeloyl-D-alanyl-D-alanine + UDP + H(+). The protein operates within cell wall biogenesis; peptidoglycan biosynthesis. Cell wall formation. Catalyzes the transfer of a GlcNAc subunit on undecaprenyl-pyrophosphoryl-MurNAc-pentapeptide (lipid intermediate I) to form undecaprenyl-pyrophosphoryl-MurNAc-(pentapeptide)GlcNAc (lipid intermediate II). The polypeptide is UDP-N-acetylglucosamine--N-acetylmuramyl-(pentapeptide) pyrophosphoryl-undecaprenol N-acetylglucosamine transferase (Pseudoalteromonas translucida (strain TAC 125)).